Reading from the N-terminus, the 353-residue chain is Quinolinate synthase (353 aa).

Residues His47 and Ser68 each contribute to the iminosuccinate site. Cys113 is a binding site for [4Fe-4S] cluster. Residues Tyr139–Asn141 and Ser156 each bind iminosuccinate. Cys200 contributes to the [4Fe-4S] cluster binding site. Iminosuccinate contacts are provided by residues His226 to Glu228 and Thr243. Cys297 contributes to the [4Fe-4S] cluster binding site.

This sequence belongs to the quinolinate synthase family. Type 1 subfamily. The cofactor is [4Fe-4S] cluster.

The protein resides in the cytoplasm. The enzyme catalyses iminosuccinate + dihydroxyacetone phosphate = quinolinate + phosphate + 2 H2O + H(+). The protein operates within cofactor biosynthesis; NAD(+) biosynthesis; quinolinate from iminoaspartate: step 1/1. Functionally, catalyzes the condensation of iminoaspartate with dihydroxyacetone phosphate to form quinolinate. The polypeptide is Quinolinate synthase (Photobacterium profundum (strain SS9)).